The sequence spans 332 residues: Ribosomal RNA small subunit methyltransferase H (332 aa).

S-adenosyl-L-methionine contacts are provided by residues 39 to 41 (GGY), Asp-56, Phe-83, Asp-100, and Gln-107.

The protein belongs to the methyltransferase superfamily. RsmH family.

It localises to the cytoplasm. It carries out the reaction cytidine(1402) in 16S rRNA + S-adenosyl-L-methionine = N(4)-methylcytidine(1402) in 16S rRNA + S-adenosyl-L-homocysteine + H(+). In terms of biological role, specifically methylates the N4 position of cytidine in position 1402 (C1402) of 16S rRNA. This chain is Ribosomal RNA small subunit methyltransferase H, found in Bartonella grahamii (strain as4aup).